The primary structure comprises 422 residues: Serine--tRNA ligase (422 aa).

Residue 238 to 240 (TSE) coordinates L-serine. An ATP-binding site is contributed by 269–271 (RKE). Glu292 is a binding site for L-serine. Residue 356–359 (EISS) participates in ATP binding. Ser390 provides a ligand contact to L-serine.

The protein belongs to the class-II aminoacyl-tRNA synthetase family. Type-1 seryl-tRNA synthetase subfamily. As to quaternary structure, homodimer. The tRNA molecule binds across the dimer.

It localises to the cytoplasm. It catalyses the reaction tRNA(Ser) + L-serine + ATP = L-seryl-tRNA(Ser) + AMP + diphosphate + H(+). The catalysed reaction is tRNA(Sec) + L-serine + ATP = L-seryl-tRNA(Sec) + AMP + diphosphate + H(+). It participates in aminoacyl-tRNA biosynthesis; selenocysteinyl-tRNA(Sec) biosynthesis; L-seryl-tRNA(Sec) from L-serine and tRNA(Sec): step 1/1. In terms of biological role, catalyzes the attachment of serine to tRNA(Ser). Is also able to aminoacylate tRNA(Sec) with serine, to form the misacylated tRNA L-seryl-tRNA(Sec), which will be further converted into selenocysteinyl-tRNA(Sec). The polypeptide is Serine--tRNA ligase (Helicobacter hepaticus (strain ATCC 51449 / 3B1)).